We begin with the raw amino-acid sequence, 456 residues long: Bifunctional protein GlmU (456 aa).

Positions Met-1–Arg-229 are pyrophosphorylase. UDP-N-acetyl-alpha-D-glucosamine contacts are provided by residues Leu-8–Gly-11, Lys-22, Gln-73, and Gly-78–Thr-79. Asp-103 is a Mg(2+) binding site. Gly-140, Glu-155, Asn-170, and Asn-227 together coordinate UDP-N-acetyl-alpha-D-glucosamine. Asn-227 contributes to the Mg(2+) binding site. Residues Gly-230–Asn-250 are linker. The segment at Gly-251 to Lys-456 is N-acetyltransferase. UDP-N-acetyl-alpha-D-glucosamine is bound by residues Arg-332 and Lys-350. The Proton acceptor role is filled by His-362. UDP-N-acetyl-alpha-D-glucosamine contacts are provided by Tyr-365 and Asn-376. Acetyl-CoA contacts are provided by residues Asn-385–Tyr-386, Ala-422, and Arg-439.

This sequence in the N-terminal section; belongs to the N-acetylglucosamine-1-phosphate uridyltransferase family. In the C-terminal section; belongs to the transferase hexapeptide repeat family. As to quaternary structure, homotrimer. It depends on Mg(2+) as a cofactor.

Its subcellular location is the cytoplasm. It catalyses the reaction alpha-D-glucosamine 1-phosphate + acetyl-CoA = N-acetyl-alpha-D-glucosamine 1-phosphate + CoA + H(+). It carries out the reaction N-acetyl-alpha-D-glucosamine 1-phosphate + UTP + H(+) = UDP-N-acetyl-alpha-D-glucosamine + diphosphate. It functions in the pathway nucleotide-sugar biosynthesis; UDP-N-acetyl-alpha-D-glucosamine biosynthesis; N-acetyl-alpha-D-glucosamine 1-phosphate from alpha-D-glucosamine 6-phosphate (route II): step 2/2. The protein operates within nucleotide-sugar biosynthesis; UDP-N-acetyl-alpha-D-glucosamine biosynthesis; UDP-N-acetyl-alpha-D-glucosamine from N-acetyl-alpha-D-glucosamine 1-phosphate: step 1/1. Its pathway is bacterial outer membrane biogenesis; LPS lipid A biosynthesis. Catalyzes the last two sequential reactions in the de novo biosynthetic pathway for UDP-N-acetylglucosamine (UDP-GlcNAc). The C-terminal domain catalyzes the transfer of acetyl group from acetyl coenzyme A to glucosamine-1-phosphate (GlcN-1-P) to produce N-acetylglucosamine-1-phosphate (GlcNAc-1-P), which is converted into UDP-GlcNAc by the transfer of uridine 5-monophosphate (from uridine 5-triphosphate), a reaction catalyzed by the N-terminal domain. The chain is Bifunctional protein GlmU from Clostridium novyi (strain NT).